An 82-amino-acid chain; its full sequence is Small ribosomal subunit protein uS17 (82 aa).

This sequence belongs to the universal ribosomal protein uS17 family. As to quaternary structure, part of the 30S ribosomal subunit.

In terms of biological role, one of the primary rRNA binding proteins, it binds specifically to the 5'-end of 16S ribosomal RNA. The polypeptide is Small ribosomal subunit protein uS17 (Synechococcus elongatus (strain ATCC 33912 / PCC 7942 / FACHB-805) (Anacystis nidulans R2)).